Consider the following 134-residue polypeptide: Antifungal protein ginkbilobin-2 (134 aa).

Positions 1 to 26 (MKTMRMNSAFILAFALAAAMLILTEA) are cleaved as a signal peptide. The 106-residue stretch at 29 to 134 (TAFVSSACNT…CFIQYEQRSF (106 aa)) folds into the Gnk2-homologous domain. 3 disulfide bridges follow: C36–C112, C88–C97, and C100–C125. Residue N37 participates in alpha-D-mannopyranose binding. Residues R119 and E130 each coordinate alpha-D-mannopyranose.

As to quaternary structure, binds actin in vitro.

It localises to the secreted. Possesses antifungal activity against F.oxysporum, T.reesei and C.albicans. Weakly inhibits the aspartic acid protease pepsin activity. Exerts antifungal activity against S.cerevisiae and F.culmorum through its carbohydrate-binding specificity. Acts as a lectin that stricly recognizes alpha-1,2-linked mannose moieties and interacts with the yeast cell wall mannan polysaccharide. Can interfere with the fungal actin remodeling resulting to the activation of an actin-dependent cell death. The polypeptide is Antifungal protein ginkbilobin-2 (Ginkgo biloba (Ginkgo)).